The primary structure comprises 175 residues: Large ribosomal subunit protein uL10 (175 aa).

This sequence belongs to the universal ribosomal protein uL10 family. Part of the ribosomal stalk of the 50S ribosomal subunit. The N-terminus interacts with L11 and the large rRNA to form the base of the stalk. The C-terminus forms an elongated spine to which L12 dimers bind in a sequential fashion forming a multimeric L10(L12)X complex.

In terms of biological role, forms part of the ribosomal stalk, playing a central role in the interaction of the ribosome with GTP-bound translation factors. The sequence is that of Large ribosomal subunit protein uL10 from Alkalilimnicola ehrlichii (strain ATCC BAA-1101 / DSM 17681 / MLHE-1).